An 88-amino-acid chain; its full sequence is MSTKNAKPKKEAQRRPSRKAKVKATLGEFDLRDYRNVEVLKRFLSETGKILPRRRTGLSGKEQRILAKTIKRARILGLLPFTEKLVRK.

The disordered stretch occupies residues Met1–Val22.

This sequence belongs to the bacterial ribosomal protein bS18 family. As to quaternary structure, part of the 30S ribosomal subunit. Forms a tight heterodimer with protein bS6.

Binds as a heterodimer with protein bS6 to the central domain of the 16S rRNA, where it helps stabilize the platform of the 30S subunit. This chain is Small ribosomal subunit protein bS18 (rpsR), found in Thermus thermophilus.